The following is a 243-amino-acid chain: Protein-L-isoaspartate O-methyltransferase (243 aa).

Ser87 is an active-site residue.

The protein belongs to the methyltransferase superfamily. L-isoaspartyl/D-aspartyl protein methyltransferase family.

The protein resides in the cytoplasm. The catalysed reaction is [protein]-L-isoaspartate + S-adenosyl-L-methionine = [protein]-L-isoaspartate alpha-methyl ester + S-adenosyl-L-homocysteine. Catalyzes the methyl esterification of L-isoaspartyl residues in peptides and proteins that result from spontaneous decomposition of normal L-aspartyl and L-asparaginyl residues. It plays a role in the repair and/or degradation of damaged proteins. This is Protein-L-isoaspartate O-methyltransferase from Methanosarcina mazei (strain ATCC BAA-159 / DSM 3647 / Goe1 / Go1 / JCM 11833 / OCM 88) (Methanosarcina frisia).